We begin with the raw amino-acid sequence, 314 residues long: Basic endochitinase (314 aa).

A signal peptide spans 1 to 20 (MGLWALVAFCLLSLILVGSA). One can recognise a Chitin-binding type-1 domain in the interval 21-61 (EQCGGQAGGRVCPGGACCSKFGWCGNTADYCGSGCQSQCSS). Intrachain disulfides connect Cys23-Cys38, Cys32-Cys44, Cys37-Cys51, Cys55-Cys59, Cys86-Cys148, Cys160-Cys168, and Cys267-Cys299. Glu130 functions as the Proton donor in the catalytic mechanism.

It belongs to the glycosyl hydrolase 19 family. Chitinase class I subfamily.

It catalyses the reaction Random endo-hydrolysis of N-acetyl-beta-D-glucosaminide (1-&gt;4)-beta-linkages in chitin and chitodextrins.. Its function is as follows. Defense against chitin-containing fungal pathogens. The chain is Basic endochitinase (CHIT1B) from Vitis vinifera (Grape).